Consider the following 273-residue polypeptide: Diphthine methyl ester synthase (273 aa).

S-adenosyl-L-methionine contacts are provided by residues L10, D87, G90, 115–116 (SI), L166, V224, and H249.

Belongs to the diphthine synthase family.

It catalyses the reaction 2-[(3S)-amino-3-carboxypropyl]-L-histidyl-[translation elongation factor 2] + 4 S-adenosyl-L-methionine = diphthine methyl ester-[translation elongation factor 2] + 4 S-adenosyl-L-homocysteine + 3 H(+). Its pathway is protein modification; peptidyl-diphthamide biosynthesis. Its function is as follows. S-adenosyl-L-methionine-dependent methyltransferase that catalyzes four methylations of the modified target histidine residue in translation elongation factor 2 (EF-2), to form an intermediate called diphthine methyl ester. The four successive methylation reactions represent the second step of diphthamide biosynthesis. This chain is Diphthine methyl ester synthase (dph5), found in Dictyostelium discoideum (Social amoeba).